Reading from the N-terminus, the 569-residue chain is Cytosolic purine 5'-nucleotidase (569 aa).

Asp52 serves as the catalytic Nucleophile. IMP-binding residues include Asp52 and Asp54. Asp52 and Asp54 together coordinate Mg(2+). Asp54 acts as the Proton donor in catalysis. ATP contacts are provided by Arg144 and Asn154. Residues Arg202, Asp206, Lys215, Thr249, Asn250, Ser251, and Lys292 each contribute to the IMP site. Residue Asp351 participates in Mg(2+) binding. ATP is bound by residues Gln453 and Arg456. Residues 527–569 are disordered; that stretch reads SISEIKPPNLFPQAPQEITHCHDEDDDEEEEEEEVEEEEEEEE. A required for tetramer assembly region spans residues 548–569; it reads HDEDDDEEEEEEEVEEEEEEEE. A compositionally biased stretch (acidic residues) spans 550 to 569; that stretch reads EDDDEEEEEEEVEEEEEEEE.

This sequence belongs to the 5'(3')-deoxyribonucleotidase family. Homotetramer. Mg(2+) is required as a cofactor.

The protein resides in the cytoplasm. It localises to the cytosol. The catalysed reaction is a ribonucleoside 5'-phosphate + H2O = a ribonucleoside + phosphate. The enzyme catalyses a 2'-deoxyribonucleoside + a ribonucleoside 5'-phosphate = a ribonucleoside + a 2'-deoxyribonucleoside 5'-phosphate. It catalyses the reaction IMP + H2O = inosine + phosphate. It carries out the reaction GMP + H2O = guanosine + phosphate. The catalysed reaction is dGMP + H2O = 2'-deoxyguanosine + phosphate. The enzyme catalyses dIMP + H2O = 2'-deoxyinosine + phosphate. It catalyses the reaction XMP + H2O = xanthosine + phosphate. It carries out the reaction inosine + GMP = guanosine + IMP. The catalysed reaction is dGMP + inosine = 2'-deoxyguanosine + IMP. The enzyme catalyses dIMP + inosine = 2'-deoxyinosine + IMP. It catalyses the reaction inosine + UMP = uridine + IMP. It carries out the reaction inosine + CMP = cytidine + IMP. The catalysed reaction is inosine + AMP = IMP + adenosine. Allosterically activated by various compounds including ATP, 2,3-BPG/2,3-Bisphosphoglyceric acid and Ap4A/P1,P4-bis(5'-adenosyl) tetraphosphate. Binding of an allosteric activator is a prerequisiste to magnesium and substrate binding. Inhibited by inorganic phosphate. Inhibited by inosine, guanosine, p-chloromercuribenzoate and NaF. Its function is as follows. Broad specificity cytosolic 5'-nucleotidase that catalyzes the dephosphorylation of 6-hydroxypurine nucleoside 5'-monophosphates. In addition, possesses a phosphotransferase activity by which it can transfer a phosphate from a donor nucleoside monophosphate to an acceptor nucleoside, preferably inosine, deoxyinosine and guanosine. Has the highest activities for IMP and GMP followed by dIMP, dGMP and XMP. Could also catalyze the transfer of phosphates from pyrimidine monophosphates but with lower efficiency. Through these activities regulates the purine nucleoside/nucleotide pools within the cell. The sequence is that of Cytosolic purine 5'-nucleotidase (NT5C2) from Gallus gallus (Chicken).